We begin with the raw amino-acid sequence, 296 residues long: Urease accessory protein UreD (296 aa).

The protein belongs to the UreD family. As to quaternary structure, ureD, UreF and UreG form a complex that acts as a GTP-hydrolysis-dependent molecular chaperone, activating the urease apoprotein by helping to assemble the nickel containing metallocenter of UreC. The UreE protein probably delivers the nickel.

The protein localises to the cytoplasm. Required for maturation of urease via the functional incorporation of the urease nickel metallocenter. This chain is Urease accessory protein UreD, found in Methylibium petroleiphilum (strain ATCC BAA-1232 / LMG 22953 / PM1).